We begin with the raw amino-acid sequence, 316 residues long: Ribosomal RNA small subunit methyltransferase H (316 aa).

S-adenosyl-L-methionine is bound by residues Ala35 to His37, Asp55, Phe84, Asp105, and Gln112.

Belongs to the methyltransferase superfamily. RsmH family.

It localises to the cytoplasm. The enzyme catalyses cytidine(1402) in 16S rRNA + S-adenosyl-L-methionine = N(4)-methylcytidine(1402) in 16S rRNA + S-adenosyl-L-homocysteine + H(+). Functionally, specifically methylates the N4 position of cytidine in position 1402 (C1402) of 16S rRNA. In Streptococcus pneumoniae (strain Taiwan19F-14), this protein is Ribosomal RNA small subunit methyltransferase H.